We begin with the raw amino-acid sequence, 2454 residues long: Probable serine/threonine-protein kinase DDB_G0277071 (2454 aa).

A compositionally biased stretch (low complexity) spans 31–51; that stretch reads TSSLTTTTTTTTTTTTTTSTT. Disordered stretches follow at residues 31–57, 206–265, 340–612, 963–1051, 1201–1330, and 1342–1528; these read TSSL…HESN, QQQL…QKQN, PRPP…LKIE, NNIN…NENE, SSDD…SNPL, and ISKG…SNNT. Residues 259-307 adopt a coiled-coil conformation; sequence KQQQKQNSQQQQQQQQQQQQQQQQQQQQQQQQQQQQQQQQQQQKLNIHE. Low complexity-rich tracts occupy residues 346-399 and 406-428; these read QQHQ…NITP and PSSV…KPTS. The span at 429–444 shows a compositional bias: polar residues; sequence IGQIQSLHYHNPSLYQ. Composition is skewed to low complexity over residues 450 to 461 and 475 to 536; these read NRNRGNNNNNNN and SSTV…NTPN. Over residues 553-568 the composition is skewed to gly residues; that stretch reads GGIGGGGGGGSGGGGI. Low complexity-rich tracts occupy residues 963–1048, 1201–1248, 1275–1284, 1299–1324, and 1346–1403; these read NNIN…TTTN, SSDD…TGGP, NSSNNNNTSS, SGSS…PTTG, and SPAS…SVST. A compositionally biased stretch (polar residues) spans 1417 to 1441; sequence LNLSSVSKTGQASTSTPNLLNLKNI. A compositionally biased stretch (low complexity) spans 1442-1478; the sequence is PTTTNNSNSTTTTTTTTPTGKPQFSLNLSSLSKSSSS. Residues 1479 to 1491 are compositionally biased toward polar residues; sequence TETVPPSQPNQPI. The span at 1509-1528 shows a compositional bias: low complexity; the sequence is STTTTTTTTTPPPINNSNNT. Residues 1730 to 2034 form the Protein kinase domain; sequence FKDLKRVAKG…TKFIAIKPTI (305 aa). ATP is bound by residues 1736–1744 and Lys-1760; that span reads VAKGAYGTV. The active-site Proton acceptor is the Asp-1858. A Tyrosine-protein phosphatase domain is found at 2130–2271; that stretch reads RPSKVASFMY…LCRWGKQRRN (142 aa). Residues 2379 to 2404 are disordered; it reads NINNNNNNNSNNSKSKQQQQQQQNQN.

Belongs to the protein kinase superfamily. Ser/Thr protein kinase family.

It carries out the reaction L-seryl-[protein] + ATP = O-phospho-L-seryl-[protein] + ADP + H(+). The catalysed reaction is L-threonyl-[protein] + ATP = O-phospho-L-threonyl-[protein] + ADP + H(+). This chain is Probable serine/threonine-protein kinase DDB_G0277071, found in Dictyostelium discoideum (Social amoeba).